Reading from the N-terminus, the 76-residue chain is Exodeoxyribonuclease 7 small subunit (76 aa).

It belongs to the XseB family. Heterooligomer composed of large and small subunits.

It is found in the cytoplasm. The catalysed reaction is Exonucleolytic cleavage in either 5'- to 3'- or 3'- to 5'-direction to yield nucleoside 5'-phosphates.. Bidirectionally degrades single-stranded DNA into large acid-insoluble oligonucleotides, which are then degraded further into small acid-soluble oligonucleotides. This chain is Exodeoxyribonuclease 7 small subunit, found in Gluconacetobacter diazotrophicus (strain ATCC 49037 / DSM 5601 / CCUG 37298 / CIP 103539 / LMG 7603 / PAl5).